The primary structure comprises 160 residues: Cytochrome b6-f complex subunit 4 (160 aa).

Helical transmembrane passes span 36–56 (LLYT…GLAV), 95–115 (LLGI…PFIE), and 127–147 (PIAM…GVAA).

It belongs to the cytochrome b family. PetD subfamily. In terms of assembly, the 4 large subunits of the cytochrome b6-f complex are cytochrome b6, subunit IV (17 kDa polypeptide, PetD), cytochrome f and the Rieske protein, while the 4 small subunits are PetG, PetL, PetM and PetN. The complex functions as a dimer.

The protein resides in the cellular thylakoid membrane. Component of the cytochrome b6-f complex, which mediates electron transfer between photosystem II (PSII) and photosystem I (PSI), cyclic electron flow around PSI, and state transitions. This is Cytochrome b6-f complex subunit 4 from Prochlorothrix hollandica.